The following is a 528-amino-acid chain: 2-isopropylmalate synthase (528 aa).

The 268-residue stretch at 12–279 folds into the Pyruvate carboxyltransferase domain; that stretch reads IRIFDTTLRD…DSSINTPRIV (268 aa). Mn(2+) is bound by residues Asp21, His214, His216, and Asn250. The tract at residues 401 to 528 is regulatory domain; it reads RLASMTISDV…TTEAPAPATA (128 aa).

The protein belongs to the alpha-IPM synthase/homocitrate synthase family. LeuA type 1 subfamily. Homodimer. Mn(2+) is required as a cofactor.

Its subcellular location is the cytoplasm. The catalysed reaction is 3-methyl-2-oxobutanoate + acetyl-CoA + H2O = (2S)-2-isopropylmalate + CoA + H(+). The protein operates within amino-acid biosynthesis; L-leucine biosynthesis; L-leucine from 3-methyl-2-oxobutanoate: step 1/4. In terms of biological role, catalyzes the condensation of the acetyl group of acetyl-CoA with 3-methyl-2-oxobutanoate (2-ketoisovalerate) to form 3-carboxy-3-hydroxy-4-methylpentanoate (2-isopropylmalate). The sequence is that of 2-isopropylmalate synthase from Stenotrophomonas maltophilia (strain R551-3).